The primary structure comprises 708 residues: Fatty acid oxidation complex subunit alpha (708 aa).

The interval 1-191 is enoyl-CoA hydratase; it reads MDNNNAFQLS…KLGVVDACVP (191 aa). The segment at 311–708 is 3-hydroxyacyl-CoA dehydrogenase; sequence APVAAVGVLG…RAGLGEKFYP (398 aa).

The protein in the N-terminal section; belongs to the enoyl-CoA hydratase/isomerase family. This sequence in the central section; belongs to the 3-hydroxyacyl-CoA dehydrogenase family. In terms of assembly, heterotetramer of two alpha chains (FadJ) and two beta chains (FadI).

It is found in the cytoplasm. It catalyses the reaction a (3S)-3-hydroxyacyl-CoA = a (2E)-enoyl-CoA + H2O. It carries out the reaction a 4-saturated-(3S)-3-hydroxyacyl-CoA = a (3E)-enoyl-CoA + H2O. The catalysed reaction is a (3S)-3-hydroxyacyl-CoA + NAD(+) = a 3-oxoacyl-CoA + NADH + H(+). The enzyme catalyses (3S)-3-hydroxybutanoyl-CoA = (3R)-3-hydroxybutanoyl-CoA. It functions in the pathway lipid metabolism; fatty acid beta-oxidation. Functionally, catalyzes the formation of a hydroxyacyl-CoA by addition of water on enoyl-CoA. Also exhibits 3-hydroxyacyl-CoA epimerase and 3-hydroxyacyl-CoA dehydrogenase activities. This chain is Fatty acid oxidation complex subunit alpha, found in Vibrio cholerae serotype O1 (strain ATCC 39315 / El Tor Inaba N16961).